The chain runs to 227 residues: Large ribosomal subunit protein uL3 (227 aa).

It belongs to the universal ribosomal protein uL3 family. Part of the 50S ribosomal subunit. Forms a cluster with proteins L14 and L19.

In terms of biological role, one of the primary rRNA binding proteins, it binds directly near the 3'-end of the 23S rRNA, where it nucleates assembly of the 50S subunit. This is Large ribosomal subunit protein uL3 from Persephonella marina (strain DSM 14350 / EX-H1).